A 393-amino-acid polypeptide reads, in one-letter code: Riboflavin biosynthesis protein RibBA (393 aa).

A DHBP synthase region spans residues 1–200 (MQLDSIDTAL…IEDLEKYRKS (200 aa)). Residues 27 to 28 (RE), aspartate 32, 139 to 143 (RRGHT), and glutamate 163 each bind D-ribulose 5-phosphate. Residue glutamate 28 participates in Mg(2+) binding. Residue histidine 142 coordinates Mg(2+). A GTP cyclohydrolase II region spans residues 201 to 393 (SISKLDAKAK…TKKEKMGHLI (193 aa)). 249-253 (RIHSA) contacts GTP. Zn(2+) is bound by residues cysteine 254, cysteine 265, and cysteine 267. Residues glutamine 270, 291–293 (EGR), and threonine 313 contribute to the GTP site. The active-site Proton acceptor; for GTP cyclohydrolase activity is aspartate 325. Arginine 327 functions as the Nucleophile; for GTP cyclohydrolase activity in the catalytic mechanism. GTP contacts are provided by serine 348 and lysine 353.

It in the N-terminal section; belongs to the DHBP synthase family. This sequence in the C-terminal section; belongs to the GTP cyclohydrolase II family. Mg(2+) is required as a cofactor. Requires Mn(2+) as cofactor. It depends on Zn(2+) as a cofactor.

The catalysed reaction is D-ribulose 5-phosphate = (2S)-2-hydroxy-3-oxobutyl phosphate + formate + H(+). The enzyme catalyses GTP + 4 H2O = 2,5-diamino-6-hydroxy-4-(5-phosphoribosylamino)-pyrimidine + formate + 2 phosphate + 3 H(+). It participates in cofactor biosynthesis; riboflavin biosynthesis; 2-hydroxy-3-oxobutyl phosphate from D-ribulose 5-phosphate: step 1/1. Its pathway is cofactor biosynthesis; riboflavin biosynthesis; 5-amino-6-(D-ribitylamino)uracil from GTP: step 1/4. Catalyzes the conversion of D-ribulose 5-phosphate to formate and 3,4-dihydroxy-2-butanone 4-phosphate. Its function is as follows. Catalyzes the conversion of GTP to 2,5-diamino-6-ribosylamino-4(3H)-pyrimidinone 5'-phosphate (DARP), formate and pyrophosphate. The chain is Riboflavin biosynthesis protein RibBA from Staphylococcus saprophyticus subsp. saprophyticus (strain ATCC 15305 / DSM 20229 / NCIMB 8711 / NCTC 7292 / S-41).